The chain runs to 171 residues: uncharacterized protein (171 aa).

Disordered regions lie at residues 68-112 (NKNN…DQPY) and 152-171 (LPEK…SIKN). The span at 161–171 (DDEDDMFSIKN) shows a compositional bias: acidic residues.

Belongs to the asfivirus H171R family.

The protein resides in the virion. This is an uncharacterized protein from African swine fever virus (strain Badajoz 1971 Vero-adapted) (Ba71V).